Here is a 358-residue protein sequence, read N- to C-terminus: NADH-quinone oxidoreductase subunit H (358 aa).

The next 8 membrane-spanning stretches (helical) occupy residues 30–50 (IAVG…LIYM), 96–116 (FLYN…FACI), 129–149 (VGVF…LLAG), 168–188 (IISY…LMGT), 201–221 (GWFI…YLIA), 265–285 (FIVA…LHII), 297–317 (IPGF…LMWI), and 336–356 (YLVP…AFGF).

The protein belongs to the complex I subunit 1 family. NDH-1 is composed of 14 different subunits. Subunits NuoA, H, J, K, L, M, N constitute the membrane sector of the complex.

Its subcellular location is the cell inner membrane. The catalysed reaction is a quinone + NADH + 5 H(+)(in) = a quinol + NAD(+) + 4 H(+)(out). NDH-1 shuttles electrons from NADH, via FMN and iron-sulfur (Fe-S) centers, to quinones in the respiratory chain. The immediate electron acceptor for the enzyme in this species is believed to be ubiquinone. Couples the redox reaction to proton translocation (for every two electrons transferred, four hydrogen ions are translocated across the cytoplasmic membrane), and thus conserves the redox energy in a proton gradient. This subunit may bind ubiquinone. The protein is NADH-quinone oxidoreductase subunit H of Bacteroides thetaiotaomicron (strain ATCC 29148 / DSM 2079 / JCM 5827 / CCUG 10774 / NCTC 10582 / VPI-5482 / E50).